Here is a 308-residue protein sequence, read N- to C-terminus: Acetylglutamate kinase (308 aa).

Substrate-binding positions include 86 to 87, Arg-108, and Asn-201; that span reads GG.

This sequence belongs to the acetylglutamate kinase family. ArgB subfamily.

It is found in the cytoplasm. The enzyme catalyses N-acetyl-L-glutamate + ATP = N-acetyl-L-glutamyl 5-phosphate + ADP. It participates in amino-acid biosynthesis; L-arginine biosynthesis; N(2)-acetyl-L-ornithine from L-glutamate: step 2/4. Catalyzes the ATP-dependent phosphorylation of N-acetyl-L-glutamate. The polypeptide is Acetylglutamate kinase (Prochlorococcus marinus (strain MIT 9303)).